A 611-amino-acid polypeptide reads, in one-letter code: Endo-1,4-beta-xylanase A (611 aa).

The N-terminal stretch at 1–26 (MRTAMAKSLGAAAFLGAALFAHTLAA) is a signal peptide. The CBM2 domain maps to 27–128 (QTATCSYNIT…SVGGSICSGS (102 aa)). 3 cysteine pairs are disulfide-bonded: cysteine 31–cysteine 125, cysteine 184–cysteine 215, and cysteine 194–cysteine 209. Positions 183–212 (QCNWYGTLYPLCVTTTNGWGWEDQRSCIAR) constitute a CBM10 domain. The region spanning 281 to 607 (SGGNADIFTS…KPAYQGVVEA (327 aa)) is the GH10 domain. Residue glutamate 391 is the Proton donor of the active site. Residue glutamate 510 is the Nucleophile of the active site.

This sequence belongs to the glycosyl hydrolase 10 (cellulase F) family.

The catalysed reaction is Endohydrolysis of (1-&gt;4)-beta-D-xylosidic linkages in xylans.. It participates in glycan degradation; xylan degradation. The protein is Endo-1,4-beta-xylanase A (xynA) of Cellvibrio japonicus (strain Ueda107) (Pseudomonas fluorescens subsp. cellulosa).